A 155-amino-acid chain; its full sequence is Small ribosomal subunit protein uS7 (155 aa).

It belongs to the universal ribosomal protein uS7 family. Part of the 30S ribosomal subunit. Contacts proteins S9 and S11.

In terms of biological role, one of the primary rRNA binding proteins, it binds directly to 16S rRNA where it nucleates assembly of the head domain of the 30S subunit. Is located at the subunit interface close to the decoding center, probably blocks exit of the E-site tRNA. The protein is Small ribosomal subunit protein uS7 of Fervidobacterium nodosum (strain ATCC 35602 / DSM 5306 / Rt17-B1).